Reading from the N-terminus, the 148-residue chain is NADPH-dependent 7-cyano-7-deazaguanine reductase (148 aa).

The Thioimide intermediate role is filled by Cys-50. Asp-57 serves as the catalytic Proton donor. Residues 72–74 (VES) and 91–92 (HE) each bind substrate.

This sequence belongs to the GTP cyclohydrolase I family. QueF type 1 subfamily.

Its subcellular location is the cytoplasm. The enzyme catalyses 7-aminomethyl-7-carbaguanine + 2 NADP(+) = 7-cyano-7-deazaguanine + 2 NADPH + 3 H(+). The protein operates within tRNA modification; tRNA-queuosine biosynthesis. Its function is as follows. Catalyzes the NADPH-dependent reduction of 7-cyano-7-deazaguanine (preQ0) to 7-aminomethyl-7-deazaguanine (preQ1). The polypeptide is NADPH-dependent 7-cyano-7-deazaguanine reductase (Helicobacter pylori (strain ATCC 700392 / 26695) (Campylobacter pylori)).